Consider the following 319-residue polypeptide: Putative replication factor C small subunit R395 (319 aa).

Position 45-52 (45-52 (GSPGVGKT)) interacts with ATP.

It belongs to the activator 1 small subunits family. RfcS subfamily.

Its function is as follows. Part of the RFC clamp loader complex which loads the PCNA sliding clamp onto DNA. The polypeptide is Putative replication factor C small subunit R395 (Acanthamoeba polyphaga mimivirus (APMV)).